The chain runs to 654 residues: Spindle assembly abnormal protein 6 homolog (654 aa).

Residues 39 to 91 (VHRKDLVIRLTDDTDPFFLYNLVISEEDFQSLKLQQGLLVDFLAFPQKFIDLL) form the PISA domain. Positions 175-471 (TRQLHITQET…QLLKNNEKLI (297 aa)) form a coiled coil. Residue serine 509 is modified to Phosphoserine. The disordered stretch occupies residues 568-589 (ASIDGQPGAAVNRPCSNDKENG). At serine 612 the chain carries Phosphoserine. Low complexity predominate over residues 634–644 (SKPTVLPSSSS). A disordered region spans residues 634-654 (SKPTVLPSSSSAYFPGQLPSS). The residue at position 654 (serine 654) is a Phosphoserine.

In terms of assembly, nine homodimers form a cartwheel structure with an internal diameter of 23 nm and radial spokes connecting to the microtubule triplets. Forms a complex with CPAP and STIL. Interacts with FBXW5. Interacts with NUP62 and TUBG1 at the centrosome. Interacts with CENATAC; the interaction increases with CENATAC acetylation. Interacts with FZR1; the interaction is regulated by CENATAC and leads to SASS6 proteasomal degradation. Ubiquitinated by the SCF(FBXW5) E3 ubiquitin-protein ligase complex during S phase, leading to its degradation and preventing centriole reduplication. Ubiquitinated by the anaphase promoting complex/cyclosome (APC/C) E3 ubiquitin-protein ligase complex, leading to its degradation and preventing centriole reduplication.

The protein resides in the cytoplasm. Its subcellular location is the cytoskeleton. The protein localises to the microtubule organizing center. It is found in the centrosome. It localises to the centriole. Its function is as follows. Central scaffolding component of the centrioles ensuring their 9-fold symmetry. Required for centrosome biogenesis and duplication. Required both for mother-centriole-dependent centriole duplication and deuterosome-dependent centriole amplification in multiciliated cells. Not required for centriole formation in embryonic stem cells but necessary to maintain centriole architecture. Required for the recruitment of STIL to the procentriole and for STIL-mediated centriole amplification. This chain is Spindle assembly abnormal protein 6 homolog, found in Mus musculus (Mouse).